A 433-amino-acid polypeptide reads, in one-letter code: Glutamate--tRNA ligase (433 aa).

The 'HIGH' region signature appears at 10-20 (PSPTGYLHIGG). The 'KMSKS' region signature appears at 211 to 215 (KMSKR). Lys214 serves as a coordination point for ATP.

Belongs to the class-I aminoacyl-tRNA synthetase family. Glutamate--tRNA ligase type 1 subfamily. In terms of assembly, monomer.

Its subcellular location is the cytoplasm. It carries out the reaction tRNA(Glu) + L-glutamate + ATP = L-glutamyl-tRNA(Glu) + AMP + diphosphate. Catalyzes the attachment of glutamate to tRNA(Glu) in a two-step reaction: glutamate is first activated by ATP to form Glu-AMP and then transferred to the acceptor end of tRNA(Glu). This Akkermansia muciniphila (strain ATCC BAA-835 / DSM 22959 / JCM 33894 / BCRC 81048 / CCUG 64013 / CIP 107961 / Muc) protein is Glutamate--tRNA ligase.